Here is a 502-residue protein sequence, read N- to C-terminus: UPF0371 protein CLD_0424 (502 aa).

This sequence belongs to the UPF0371 family.

The polypeptide is UPF0371 protein CLD_0424 (Clostridium botulinum (strain Okra / Type B1)).